The sequence spans 348 residues: Flagellar P-ring protein (348 aa).

The signal sequence occupies residues 1-16 (MRVLTIFLLFMTSIFA).

The protein belongs to the FlgI family. The basal body constitutes a major portion of the flagellar organelle and consists of four rings (L,P,S, and M) mounted on a central rod.

Its subcellular location is the periplasm. The protein localises to the bacterial flagellum basal body. Functionally, assembles around the rod to form the L-ring and probably protects the motor/basal body from shearing forces during rotation. The sequence is that of Flagellar P-ring protein from Campylobacter jejuni subsp. jejuni serotype O:23/36 (strain 81-176).